Reading from the N-terminus, the 1388-residue chain is Retrotransposon Gag-like protein 9 (1388 aa).

Disordered regions lie at residues 491 to 511, 769 to 790, 895 to 918, 1100 to 1138, and 1336 to 1388; these read ATAS…GAMS, TPLM…ASSS, GGVS…RRPS, TDSG…PKEV, and AMGN…HTNK. A compositionally biased stretch (polar residues) spans 1103–1123; sequence GEASTSHINITASGSKPTSHM. Residues 1359–1374 are compositionally biased toward basic and acidic residues; sequence YLKEHGDPQEGLHDHL.

The chain is Retrotransposon Gag-like protein 9 from Homo sapiens (Human).